The primary structure comprises 473 residues: Ribulose bisphosphate carboxylase large chain (473 aa).

N116 and T166 together coordinate substrate. The Proton acceptor role is filled by K168. Residue K170 coordinates substrate. Mg(2+)-binding residues include K194, D196, and E197. N6-carboxylysine is present on K194. Residue H287 is the Proton acceptor of the active site. Residues R288, H320, and S372 each contribute to the substrate site.

Belongs to the RuBisCO large chain family. Type I subfamily. Heterohexadecamer of 8 large chains and 8 small chains. The cofactor is Mg(2+).

It catalyses the reaction 2 (2R)-3-phosphoglycerate + 2 H(+) = D-ribulose 1,5-bisphosphate + CO2 + H2O. The enzyme catalyses D-ribulose 1,5-bisphosphate + O2 = 2-phosphoglycolate + (2R)-3-phosphoglycerate + 2 H(+). RuBisCO catalyzes two reactions: the carboxylation of D-ribulose 1,5-bisphosphate, the primary event in carbon dioxide fixation, as well as the oxidative fragmentation of the pentose substrate. Both reactions occur simultaneously and in competition at the same active site. This Alkalilimnicola ehrlichii (strain ATCC BAA-1101 / DSM 17681 / MLHE-1) protein is Ribulose bisphosphate carboxylase large chain.